Reading from the N-terminus, the 330-residue chain is MLDDWIYIFLPRISCALAWVVNPIFVYFIFTEKSQTFGNYRYLLLFFALFNLLYSVVNVVVPIDIHNYRYCFFLILRHGWFVEISDFHYHMAAGRCSLVASSYALLLVHFIYRFLVIYDSSLTRLHFHWYMTGSLLLSVAYFVAWQTICWFLGYASVEMRQYVREEIRRTYGRDSMDFNMIGTLYDEASYEAKFKSWLATIIWSSISVASISAYMVLALLTIHKLKKMSCNASKKTSKFQFELLRALIVQTLIPIVISFSPCLLCWYTPIFGIQLPREFNYFEVGALGLFSFVDPIAIILCLPIFRHRISNFWKTSTTSLEEPSTKVRNI.

7 consecutive transmembrane segments (helical) span residues 6 to 26, 43 to 63, 98 to 118, 135 to 155, 200 to 220, 253 to 273, and 285 to 305; these read IYIF…PIFV, LLLF…VVPI, LVAS…LVIY, LLLS…LGYA, TIIW…LALL, IPIV…IFGI, and GALG…LPIF.

This sequence belongs to the nematode receptor-like protein srj family.

It localises to the membrane. The protein is Serpentine receptor class J-38 (srj-38) of Caenorhabditis elegans.